An 89-amino-acid chain; its full sequence is Small ribosomal subunit protein uS15 (89 aa).

Belongs to the universal ribosomal protein uS15 family. Part of the 30S ribosomal subunit. Forms a bridge to the 50S subunit in the 70S ribosome, contacting the 23S rRNA.

Its function is as follows. One of the primary rRNA binding proteins, it binds directly to 16S rRNA where it helps nucleate assembly of the platform of the 30S subunit by binding and bridging several RNA helices of the 16S rRNA. Functionally, forms an intersubunit bridge (bridge B4) with the 23S rRNA of the 50S subunit in the ribosome. The chain is Small ribosomal subunit protein uS15 from Shewanella frigidimarina (strain NCIMB 400).